The primary structure comprises 417 residues: D-galactonate dehydratase family member Dd703_0947 (417 aa).

H127 provides a ligand contact to substrate. Y158 (proton donor/acceptor) is an active-site residue. Residue D223 participates in Mg(2+) binding. Residue H225 is the Proton donor/acceptor of the active site. E249 and E275 together coordinate Mg(2+). Residues E275, R296, H325, D329, and E352 each contribute to the substrate site.

This sequence belongs to the mandelate racemase/muconate lactonizing enzyme family. GalD subfamily. It depends on Mg(2+) as a cofactor.

It carries out the reaction D-mannonate = 2-dehydro-3-deoxy-D-gluconate + H2O. The enzyme catalyses D-gluconate = 2-dehydro-3-deoxy-D-gluconate + H2O. In terms of biological role, has low dehydratase activity with D-mannonate and D-gluconate, suggesting that these are not physiological substrates and that it has no significant role in the in vivo degradation of these compounds. Has no detectable activity with a panel of 70 other acid sugars (in vitro). This Musicola paradisiaca (strain Ech703) (Dickeya paradisiaca) protein is D-galactonate dehydratase family member Dd703_0947.